An 885-amino-acid chain; its full sequence is Sensor histidine kinase KdpD (885 aa).

A run of 4 helical transmembrane segments spans residues 384 to 404 (AIDM…GLWI), 415 to 435 (IILM…RSFI), 436 to 456 (IGFL…TEPR), and 464 to 484 (FDYP…SALL). The 221-residue stretch at 660 to 880 (SISHDIRTPL…IFYFNIYTDF (221 aa)) folds into the Histidine kinase domain. Position 663 is a phosphohistidine; by autocatalysis (His-663).

It is found in the membrane. It catalyses the reaction ATP + protein L-histidine = ADP + protein N-phospho-L-histidine.. With respect to regulation, cyclic di-AMP is a negative regulator of the Kdp system. Its function is as follows. Member of the two-component regulatory system KdpD/KdpE that regulates the transcription of a series of virulence factors through sensing external K(+) concentrations. Also regulates capsular polysaccharide production. May function as a membrane-associated protein kinase that phosphorylates KdpE in response to environmental signals. In turn, KpdE functions as a transcriptional regulator by direct binding to promoter regions of target genes including spa, hla, aur and geh. The protein is Sensor histidine kinase KdpD of Staphylococcus aureus (strain NCTC 8325 / PS 47).